We begin with the raw amino-acid sequence, 60 residues long: Mannitol-specific phosphotransferase enzyme IIA component (60 aa).

The 59-residue stretch at S2–D60 folds into the PTS EIIA type-2 domain. H56 functions as the Tele-phosphohistidine intermediate in the catalytic mechanism. H56 carries the phosphohistidine; by HPr modification.

In terms of assembly, homodimer or homotrimer. Seems to be a monomer when not phosphorylated.

It is found in the cytoplasm. Functionally, the phosphoenolpyruvate-dependent sugar phosphotransferase system (sugar PTS), a major carbohydrate active transport system, catalyzes the phosphorylation of incoming sugar substrates concomitantly with their translocation across the cell membrane. The enzyme II CmtAB PTS system is involved in D-mannitol transport. This is Mannitol-specific phosphotransferase enzyme IIA component from Staphylococcus aureus.